A 470-amino-acid chain; its full sequence is Ribulose bisphosphate carboxylase large chain (470 aa).

Substrate contacts are provided by asparagine 118 and threonine 168. Lysine 170 (proton acceptor) is an active-site residue. Lysine 172 is a binding site for substrate. Mg(2+) contacts are provided by lysine 196, aspartate 198, and glutamate 199. N6-carboxylysine is present on lysine 196. Catalysis depends on histidine 289, which acts as the Proton acceptor. The substrate site is built by arginine 290, histidine 322, and serine 374.

This sequence belongs to the RuBisCO large chain family. Type I subfamily. As to quaternary structure, heterohexadecamer of 8 large chains and 8 small chains; disulfide-linked. The disulfide link is formed within the large subunit homodimers. RuBisCO interacts with the C-terminus of CcmM, and can be found in complexes that also include carbonic anhydrase (ccaA). RuBisCO associates with both the internal and shell portion of carboxysomes. Requires Mg(2+) as cofactor. Post-translationally, the disulfide bond which can form in the large chain dimeric partners within the hexadecamer appears to be associated with oxidative stress and protein turnover.

It localises to the carboxysome. The enzyme catalyses 2 (2R)-3-phosphoglycerate + 2 H(+) = D-ribulose 1,5-bisphosphate + CO2 + H2O. The catalysed reaction is D-ribulose 1,5-bisphosphate + O2 = 2-phosphoglycolate + (2R)-3-phosphoglycerate + 2 H(+). Its function is as follows. RuBisCO catalyzes two reactions: the carboxylation of D-ribulose 1,5-bisphosphate, the primary event in carbon dioxide fixation, as well as the oxidative fragmentation of the pentose substrate in the photorespiration process. Both reactions occur simultaneously and in competition at the same active site. The polypeptide is Ribulose bisphosphate carboxylase large chain (Synechocystis sp. (strain ATCC 27184 / PCC 6803 / Kazusa)).